A 111-amino-acid polypeptide reads, in one-letter code: Protein 0.6B (111 aa).

A disordered region spans residues 82–111; it reads LERRKDKRGRRGIDERKRLKPRNSPHLNRH. Residues 99–111 show a composition bias toward basic residues; the sequence is RLKPRNSPHLNRH.

The chain is Protein 0.6B (0.6A) from Escherichia coli (Bacteriophage T7).